The following is a 465-amino-acid chain: Chromosomal replication initiator protein DnaA (465 aa).

The tract at residues methionine 1–glutamate 87 is domain I, interacts with DnaA modulators. The interval serine 81–serine 123 is disordered. The segment covering glutamine 88–proline 100 has biased composition (low complexity). Positions glutamine 88–lysine 127 are domain II. The tract at residues leucine 128–serine 345 is domain III, AAA+ region. Glycine 173, glycine 175, lysine 176, and threonine 177 together coordinate ATP. Residues arginine 346 to serine 465 form a domain IV, binds dsDNA region.

It belongs to the DnaA family. As to quaternary structure, oligomerizes as a right-handed, spiral filament on DNA at oriC.

It localises to the cytoplasm. Its function is as follows. Plays an essential role in the initiation and regulation of chromosomal replication. ATP-DnaA binds to the origin of replication (oriC) to initiate formation of the DNA replication initiation complex once per cell cycle. Binds the DnaA box (a 9 base pair repeat at the origin) and separates the double-stranded (ds)DNA. Forms a right-handed helical filament on oriC DNA; dsDNA binds to the exterior of the filament while single-stranded (ss)DNA is stabiized in the filament's interior. The ATP-DnaA-oriC complex binds and stabilizes one strand of the AT-rich DNA unwinding element (DUE), permitting loading of DNA polymerase. After initiation quickly degrades to an ADP-DnaA complex that is not apt for DNA replication. Binds acidic phospholipids. The polypeptide is Chromosomal replication initiator protein DnaA (Acinetobacter baumannii (strain ATCC 17978 / DSM 105126 / CIP 53.77 / LMG 1025 / NCDC KC755 / 5377)).